The chain runs to 88 residues: Sec-independent protein translocase protein TatA (88 aa).

A helical transmembrane segment spans residues 1–21; it reads MGGIGIWQLAIITVIVILLFG. Residues 46 to 88 are disordered; it reads DNDKDSTQVDDKDSTQVDDNAKQPSNKKVEENIKEQSKEKDRA.

It belongs to the TatA/E family. As to quaternary structure, the Tat system comprises two distinct complexes: a TatABC complex, containing multiple copies of TatA, TatB and TatC subunits, and a separate TatA complex, containing only TatA subunits. Substrates initially bind to the TatABC complex, which probably triggers association of the separate TatA complex to form the active translocon.

It is found in the cell inner membrane. Part of the twin-arginine translocation (Tat) system that transports large folded proteins containing a characteristic twin-arginine motif in their signal peptide across membranes. TatA could form the protein-conducting channel of the Tat system. This chain is Sec-independent protein translocase protein TatA, found in Psychromonas ingrahamii (strain DSM 17664 / CCUG 51855 / 37).